The following is a 51-amino-acid chain: uncharacterized protein (51 aa).

The disordered stretch occupies residues 1-51; it reads MARTNVKLCPPKRSKRPSNSRSKSTSHSNRRSLNSLRRTRTSRRSNNGKFT. Low complexity predominate over residues 19–36; that stretch reads NSRSKSTSHSNRRSLNSL.

This is an uncharacterized protein from Bdellovibrio bacteriovorus (Bacteriophage phiMH2K).